We begin with the raw amino-acid sequence, 727 residues long: LIM domain-binding protein 3 (727 aa).

The region spanning 1–84 is the PDZ domain; sequence MSYSVTLTGP…NLSLTLQKSK (84 aa). Ser-44, Ser-121, and Ser-123 each carry phosphoserine. A disordered region spans residues 86-197; sequence PIPISTTAPP…GSSQPRQYNN (112 aa). Residues 140 to 156 show a composition bias toward low complexity; that stretch reads PTFSPAFSRPSAFSSLA. The span at 188-197 shows a compositional bias: polar residues; it reads GSSQPRQYNN. Phosphoserine is present on Ser-217. Arg-219 is modified (omega-N-methylarginine). Ser-223 bears the Phosphoserine mark. Disordered regions lie at residues 284–440 and 472–529; these read TEFM…YTPS and APSV…PQVP. The span at 312–385 shows a compositional bias: low complexity; that stretch reads ATTPLLPASA…SAPATHTSYS (74 aa). A compositionally biased stretch (pro residues) spans 428–440; that stretch reads PYTPSPAPAYTPS. The segment covering 494–513 has biased composition (polar residues); the sequence is DSFSQKFAPGKSTTSISKQT. 2 positions are modified to omega-N-methylarginine: Arg-516 and Arg-533. 3 LIM zinc-binding domains span residues 549-607, 608-667, and 668-727; these read PLCG…QFFA, PLCA…LFST, and KCHG…TINL.

As to quaternary structure, interacts via its LIM domains with various PKC isoforms. Interacts via its PDZ domain with the ACTN2 C-terminal region. Interacts with MYOZ1, MYOZ2 and MYOZ3. In terms of tissue distribution, expressed primarily in skeletal muscle and to a lesser extent in heart. Also detected in brain and placenta.

The protein resides in the cytoplasm. It is found in the perinuclear region. The protein localises to the cell projection. It localises to the pseudopodium. Its subcellular location is the cytoskeleton. The protein resides in the myofibril. It is found in the sarcomere. The protein localises to the z line. Functionally, may function as an adapter in striated muscle to couple protein kinase C-mediated signaling via its LIM domains to the cytoskeleton. This chain is LIM domain-binding protein 3, found in Homo sapiens (Human).